The chain runs to 6548 residues: Epiplakin (6548 aa).

T33 bears the Phosphothreonine mark. 9 Plectin repeats span residues A41 to G78, L79 to K116, E117 to G154, W155 to W192, R285 to A322, L323 to H360, Q362 to A398, L399 to R436, and Q437 to G470. Residues S49–L1123 form an interaction with KRT5 region. Residues S545–K565 are a coiled coil. 5 Plectin repeats span residues Q611–A648, L649–Y686, A687–G724, I725–N762, and L766–G800. The stretch at T851 to I886 forms a coiled coil. Plectin repeat units follow at residues H931 to A968, L969 to Y1006, G1007 to A1044, Q1224 to G1284, Q1285 to S1322, E1323 to A1360, F1361 to S1398, and T1402 to G1436. Phosphothreonine is present on T1551. 5 Plectin repeats span residues R1572 to A1609, L1610 to Y1647, M1648 to G1685, I1686 to N1723, and S1727 to G1761. Residues F1580–L6545 are interaction with KRT5. Residues R1819–Q1851 adopt a coiled-coil conformation. Plectin repeat units follow at residues R1898–A1935, A1936–R1973, E1974–A2011, L2012–L2049, K2225–A2267, L2268–Q2305, E2306–G2343, I2344–N2381, and A2385–G2419. Phosphoserine occurs at positions 2430 and 2508. Positions A2578–T2626 are disordered. A compositionally biased stretch (basic and acidic residues) spans Q2582–S2592. Polar residues-rich tracts occupy residues L2593–S2606 and S2615–T2626. Plectin repeat units lie at residues K2740–A2782, L2783–Q2820, E2821–G2858, I2859–N2896, and A2900–G2934. An interaction with KRT14 region spans residues C2748–L2940. A disordered region spans residues A3093–A3144. The span at Q3097 to S3107 shows a compositional bias: basic and acidic residues. Composition is skewed to polar residues over residues L3108–S3121 and S3130–A3144. S3220 is subject to Phosphoserine. Plectin repeat units lie at residues K3255–A3297, L3298–Q3335, E3336–G3373, I3374–N3411, and A3415–G3449. 2 positions are modified to phosphoserine: S3460 and S3538. The interval A3608–A3659 is disordered. A compositionally biased stretch (basic and acidic residues) spans Q3612–S3622. Polar residues-rich tracts occupy residues L3623–S3636 and S3645–A3659. Position 3735 is a phosphoserine (S3735). Plectin repeat units follow at residues K3770–A3812, L3813–Q3850, E3851–G3888, I3889–N3926, and A3930–G3964. A phosphoserine mark is found at S3975 and S4053. Residues A4123–A4174 form a disordered region. A compositionally biased stretch (basic and acidic residues) spans Q4127–S4137. 2 stretches are compositionally biased toward polar residues: residues L4138 to S4151 and S4160 to A4174. Plectin repeat units lie at residues K4285–A4327, L4328–Q4365, E4366–G4403, I4404–N4441, and A4445–G4479. Residues A4638–A4689 are disordered. A compositionally biased stretch (basic and acidic residues) spans Q4642–S4652. Composition is skewed to polar residues over residues L4653–S4666 and S4675–A4689. At S4765 the chain carries Phosphoserine. 5 Plectin repeats span residues K4800–A4842, L4843–Q4880, E4881–G4918, I4919–N4956, and A4960–G4994. Phosphoserine is present on residues S5005 and S5083. The interval A5153–A5204 is disordered. Residues Q5157–S5167 are compositionally biased toward basic and acidic residues. Composition is skewed to polar residues over residues L5168 to S5181 and S5190 to A5204. Plectin repeat units lie at residues K5315–A5357, L5358–Q5395, E5396–G5433, I5434–N5471, and A5475–G5509. Positions A5668–A5719 are disordered. Over residues Q5672–S5682 the composition is skewed to basic and acidic residues. 2 stretches are compositionally biased toward polar residues: residues L5683–S5696 and S5705–A5719. Phosphoserine is present on S5795. 5 Plectin repeats span residues K5830 to A5872, L5873 to Q5910, E5911 to G5948, I5949 to N5986, and A5990 to G6024. Residues S6035 and S6113 each carry the phosphoserine modification. The disordered stretch occupies residues A6183–A6234. A compositionally biased stretch (basic and acidic residues) spans Q6187–S6197. Polar residues-rich tracts occupy residues L6198–S6211 and S6220–A6234. S6310 is modified (phosphoserine). 5 Plectin repeats span residues K6345 to A6387, L6388 to Q6425, E6426 to G6463, I6464 to N6501, and A6505 to G6539.

The protein belongs to the plakin or cytolinker family. As to quaternary structure, interacts with KRT5, KRT14 and KRT5/KRT14 heterotetramer; interacts preferentially with assembled filaments rather than keratin monomers. Interacts with KRT8 and KRT18 and KRT8/KRT18 heterotetramer; interacts preferentially with assembled filaments rather than keratin monomers. Interacts with KRT1, VIM and DES; interaction is stronger with KRT1 than with VIM or DES; interaction is dependent of higher-order structure of intermediate filament. In terms of tissue distribution, high levels in skin, small intestine and salivary gland. Lower levels in lung, uterus and liver. Not detected in brain, kidney, muscle, heart or spleen. In skin, expressed in all epidermal layers but not in the dermis. In intestine, expressed exclusively in the epithelial cell layer of the villi. In liver, expressed at hepatocyte margins. Around the region of the wound, expressed in the upper half of the epidermis. Weakly expressed on the basilar side of the suprabasal layer of the epidermis at the wound's edge. Expressed strongly in the upper layer of the epidermis, especially in larger keratinocytes. Expressed in undifferentiated primary keratinocytes. Strongly expressed in ductal cells, and also expressed in acinar cells. Expressed in hepatocytes and cholangiocytes.

Its subcellular location is the cytoplasm. The protein resides in the cytoskeleton. The protein localises to the apicolateral cell membrane. It is found in the basolateral cell membrane. It localises to the cell junction. Its subcellular location is the hemidesmosome. The protein resides in the tight junction. The protein localises to the cell projection. Cytoskeletal linker protein that connects to intermediate filaments and controls their reorganization in response to stress. In response to mechanical stress like wound healing, is associated with the machinery for cellular motility by slowing down keratinocyte migration and proliferation and accelerating keratin bundling in proliferating keratinocytes thus contributing to tissue architecture. However in wound healing in corneal epithelium also positively regulates cell differentiation and proliferation and negatively regulates migration thereby controlling corneal epithelium morphogenesis and integrity. In response to cellular stress, plays a role in keratin filament reorganization, probably by protecting keratin filaments against disruption. During liver and pancreas injuries, plays a protective role by chaperoning disease-induced intermediate filament reorganization. The sequence is that of Epiplakin from Mus musculus (Mouse).